A 588-amino-acid chain; its full sequence is Aspartate--tRNA ligase (588 aa).

An L-aspartate-binding site is contributed by Glu174. The tract at residues 198–201 is aspartate; the sequence is QLFK. Arg220 contacts L-aspartate. ATP is bound by residues 220–222 and Gln229; that span reads RDE. His448 contacts L-aspartate. Glu482 is an ATP binding site. Arg489 contributes to the L-aspartate binding site. 534-537 contacts ATP; the sequence is GIDR.

It belongs to the class-II aminoacyl-tRNA synthetase family. Type 1 subfamily. In terms of assembly, homodimer.

It localises to the cytoplasm. It catalyses the reaction tRNA(Asp) + L-aspartate + ATP = L-aspartyl-tRNA(Asp) + AMP + diphosphate. Functionally, catalyzes the attachment of L-aspartate to tRNA(Asp) in a two-step reaction: L-aspartate is first activated by ATP to form Asp-AMP and then transferred to the acceptor end of tRNA(Asp). This is Aspartate--tRNA ligase from Xanthomonas euvesicatoria pv. vesicatoria (strain 85-10) (Xanthomonas campestris pv. vesicatoria).